Reading from the N-terminus, the 224-residue chain is MQLTLNLSGSAGMQLLLLVSSLLLWENVSSKPTAMVPTEDLYTRLAELLHNTFILAADVYREFDLDFFDKTWITDRTLPLCHTASIHTPENREEVHETKTEDLLKAMINVSISWKEPLKHLVSALTALPGASESMGKKAADIKGRNLVILEGLQTIYNRSQANIEENENFDYPAWSGLEELQSPNEDTHLFAVYNLCRCIKRDIHKIDSYIKVLRCRVVFQNEC.

Positions 1-29 (MQLTLNLSGSAGMQLLLLVSSLLLWENVS) are cleaved as a signal peptide. Disulfide bonds link Cys-81-Cys-199 and Cys-216-Cys-224. N-linked (GlcNAc...) asparagine glycosylation is found at Asn-109 and Asn-158.

The protein belongs to the somatotropin/prolactin family.

Its subcellular location is the secreted. This chain is Prolactin-3D1 (Prl3d1), found in Mus musculus (Mouse).